The following is a 474-amino-acid chain: UDP glycosyltransferase 9 (474 aa).

Residues Ser-296, 349-350 (WC), 367-375 (HCGWNSTLE), and 389-392 (WADQ) each bind UDP-alpha-D-glucose.

This sequence belongs to the UDP-glycosyltransferase family.

The sequence is that of UDP glycosyltransferase 9 from Catharanthus roseus (Madagascar periwinkle).